Here is a 150-residue protein sequence, read N- to C-terminus: D-aminoacyl-tRNA deacylase (150 aa).

A Gly-cisPro motif, important for rejection of L-amino acids motif is present at residues 136–137; that stretch reads GP.

This sequence belongs to the DTD family. Homodimer.

The protein localises to the cytoplasm. The catalysed reaction is glycyl-tRNA(Ala) + H2O = tRNA(Ala) + glycine + H(+). It carries out the reaction a D-aminoacyl-tRNA + H2O = a tRNA + a D-alpha-amino acid + H(+). In terms of biological role, an aminoacyl-tRNA editing enzyme that deacylates mischarged D-aminoacyl-tRNAs. Also deacylates mischarged glycyl-tRNA(Ala), protecting cells against glycine mischarging by AlaRS. Acts via tRNA-based rather than protein-based catalysis; rejects L-amino acids rather than detecting D-amino acids in the active site. By recycling D-aminoacyl-tRNA to D-amino acids and free tRNA molecules, this enzyme counteracts the toxicity associated with the formation of D-aminoacyl-tRNA entities in vivo and helps enforce protein L-homochirality. The protein is D-aminoacyl-tRNA deacylase of Staphylococcus carnosus (strain TM300).